Here is a 78-residue protein sequence, read N- to C-terminus: Large ribosomal subunit protein bL28 (78 aa).

The protein belongs to the bacterial ribosomal protein bL28 family.

The protein is Large ribosomal subunit protein bL28 (rpmB) of Treponema pallidum (strain Nichols).